A 483-amino-acid chain; its full sequence is Serine protease HTRA4 (483 aa).

The first 30 residues, 1 to 30 (MSFQRLWAVRTQFLLLWLLLPAVPVPWAEA), serve as a signal peptide directing secretion. Residues 35 to 113 (VSLPCPDACD…GAWLGTCGCA (79 aa)) form the IGFBP N-terminal domain. 6 disulfides stabilise this stretch: C39–C65, C43–C67, C48–C68, C54–C71, C79–C93, and C87–C110. A serine protease region spans residues 208–368 (GSGFIVSEDG…IPSDRIRQFL (161 aa)). Active-site charge relay system residues include H224, D254, and S332. Residues 379-471 (KAPLQKKYLG…LSIIVLRGSQ (93 aa)) form the PDZ domain.

Belongs to the peptidase S1C family.

Its subcellular location is the secreted. Its function is as follows. Serine protease. The polypeptide is Serine protease HTRA4 (Htra4) (Mus musculus (Mouse)).